Here is a 240-residue protein sequence, read N- to C-terminus: uncharacterized protein (240 aa).

Residues 1-11 (MGMTPRRKRRG) are compositionally biased toward basic residues. The segment at 1–32 (MGMTPRRKRRGGAVQITRPTGRPRTPTTQTTK) is disordered. Residues 17–31 (TRPTGRPRTPTTQTT) show a composition bias toward low complexity. The next 6 membrane-spanning stretches (helical) occupy residues 36–56 (WVVGGTTILTFVALLYLVELI), 93–113 (LMANTIPLLVLGFLMTLAGLS), 115–135 (FVWATAIIWILGGLGTWLIGN), 146–166 (IGASGLIFGWLAFLLVFGLFV), 172–192 (IVIGLVVLFVYGGILLGAMPV), and 198–218 (GVSWQGHLSGAVAGVVAAYLL).

This sequence to M.leprae ML1171.

The protein resides in the cell membrane. This is an uncharacterized protein from Mycobacterium tuberculosis (strain CDC 1551 / Oshkosh).